The sequence spans 428 residues: L-fucose-proton symporter (428 aa).

12 helical membrane-spanning segments follow: residues 10-30 (FIVPFVLITSLFALWGFANDI), 51-71 (LVQLAFYGGYGTMAIPAALFA), 78-98 (AGILLGLALYAIGAFLFWPAA), 100-120 (YEIFNFFLVSLYILTFGLAFL), 147-167 (FNPLGSITGMFVASQLVLTNL), 204-224 (IALGFVVVAVFIIIGLKKMPA), 250-270 (EGVIAQAFYVGVQIMCWTFIV), 288-308 (IIAMAIFISSRFISTALMKYL), 311-331 (EFMLMLFAIGGFLSILGVIFI), 339-359 (CLILTSGFMPLMFPTIYGIAL), 371-391 (AGLVMAIVGGALMPPLQGMII), and 401-421 (AVNFSFILPLICFVVIAIYGF).

This sequence belongs to the major facilitator superfamily. FHS transporter (TC 2.A.1.7) family.

It localises to the cell inner membrane. It catalyses the reaction L-fucose(in) + H(+)(in) = L-fucose(out) + H(+)(out). Mediates the uptake of L-fucose across the boundary membrane with the concomitant transport of protons into the cell (symport system). This Haemophilus influenzae (strain ATCC 51907 / DSM 11121 / KW20 / Rd) protein is L-fucose-proton symporter (fucP).